A 399-amino-acid polypeptide reads, in one-letter code: UDP-galactopyranose mutase (399 aa).

Residues phenylalanine 18, glutamate 38, asparagine 46, and leucine 66 each coordinate FAD. UDP-alpha-D-galactose-binding residues include phenylalanine 157, threonine 162, tryptophan 166, and tyrosine 191. Residue 224–225 (DW) participates in FAD binding. Positions 282, 292, and 328 each coordinate UDP-alpha-D-galactose. FAD is bound at residue arginine 360. Residue tyrosine 366 participates in UDP-alpha-D-galactose binding. An FAD-binding site is contributed by 367 to 369 (LDM).

This sequence belongs to the UDP-galactopyranose/dTDP-fucopyranose mutase family. As to quaternary structure, homotetramer. The cofactor is FAD.

It carries out the reaction UDP-alpha-D-galactose = UDP-alpha-D-galactofuranose. The protein operates within cell wall biogenesis; cell wall polysaccharide biosynthesis. In terms of biological role, catalyzes the interconversion through a 2-keto intermediate of uridine diphosphogalactopyranose (UDP-GalP) into uridine diphosphogalactofuranose (UDP-GalF) which is a key building block for cell wall construction in Mycobacterium tuberculosis. The protein is UDP-galactopyranose mutase (glf) of Mycobacterium tuberculosis (strain CDC 1551 / Oshkosh).